The sequence spans 184 residues: UPF0397 protein SAR2767 (184 aa).

5 helical membrane passes run 11–31 (VVAIGIGAAVFVILGRFVVIP), 44–64 (AFLALISAIFGPFAGLMTGLI), 77–97 (AWWSWVICSGIIGCLYGWIGL), 117–137 (GQIIANIICWALIAPTLDILI), and 148–168 (QGVISAVLNIISVGIIGTILL).

The protein belongs to the UPF0397 family.

It is found in the cell membrane. This Staphylococcus aureus (strain MRSA252) protein is UPF0397 protein SAR2767.